The chain runs to 897 residues: Protein transport protein SEC24-1 (897 aa).

The Zn(2+) site is built by Cys-213, Cys-216, Cys-235, and Cys-238. The zinc finger-like stretch occupies residues 213 to 238; the sequence is CRRCRSYINPFAKFIEQGRRWRCNFC.

This sequence belongs to the SEC23/SEC24 family. SEC24 subfamily. As to quaternary structure, the COPII coat is composed of at least 5 proteins: the SEC23/24 complex, the SEC13/31 complex, and the protein SAR1. Golgi apparatus membrane; Peripheral membrane protein; Cytoplasmic side.

It localises to the cytoplasm. It is found in the cytoplasmic vesicle. The protein localises to the COPII-coated vesicle membrane. The protein resides in the endoplasmic reticulum membrane. Its subcellular location is the golgi apparatus membrane. Component of the coat protein complex II (COPII) which promotes the formation of transport vesicles from the endoplasmic reticulum (ER). The coat has two main functions, the physical deformation of the endoplasmic reticulum membrane into vesicles and the selection of cargo molecules. The protein is Protein transport protein SEC24-1 (SEC241) of Candida glabrata (strain ATCC 2001 / BCRC 20586 / JCM 3761 / NBRC 0622 / NRRL Y-65 / CBS 138) (Yeast).